The chain runs to 748 residues: Pentatricopeptide repeat-containing protein At3g13880 (748 aa).

17 PPR repeats span residues 46-80 (DSEG…SLNP), 81-111 (CLYL…MPER), 112-146 (NIIS…NLKL), 147-181 (DKFT…GLSQ), 182-212 (QVFL…CDER), 213-247 (DQVS…GLNL), 248-285 (TTYA…GMEF), 286-316 (DIVV…MPSK), 317-356 (NVVT…GLEP), 357-391 (SPST…NFQS), 392-422 (DEFI…TSKQ), 423-457 (DIAS…HIRP), 458-492 (EEYT…GIDA), 493-523 (FTSV…VQNP), 524-558 (DVAT…GIKP), 559-589 (NQQA…MKND), and 595-629 (NEKH…DHPV). The segment at 630 to 705 (TWRALLSSCR…EPALSWIVIG (76 aa)) is type E motif. The segment at 706–736 (NQTHSFAVADLSHPSSQMIYTMLETMDNVDF) is type E(+) motif.

It belongs to the PPR family. PCMP-E subfamily.

The protein is Pentatricopeptide repeat-containing protein At3g13880 (PCMP-E89) of Arabidopsis thaliana (Mouse-ear cress).